A 718-amino-acid polypeptide reads, in one-letter code: Centromere/kinetochore protein zw10 (718 aa).

Belongs to the ZW10 family.

It is found in the cytoplasm. It localises to the nucleus. The protein resides in the chromosome. Its subcellular location is the centromere. The protein localises to the kinetochore. Functionally, required for accurate chromosome segregation. The chain is Centromere/kinetochore protein zw10 (mit(1)15) from Drosophila pseudoobscura pseudoobscura (Fruit fly).